The sequence spans 266 residues: Endoplasmic reticulum vesicle protein 25 (266 aa).

A signal peptide spans 1 to 26; that stretch reads MGSSPQSSTRTLLGLLFLLLVQLSSA. Residues 27–188 are Lumenal-facing; that stretch reads LKFDLHASSG…TNESTNERVK (162 aa). One can recognise a GOLD domain in the interval 39–129; the sequence is ERCIRNFVFK…YKSVELDVEI (91 aa). Residues 189–209 form a helical membrane-spanning segment; that stretch reads WFAFGTMGMLVGLGVWQVVYL. Over 210 to 266 the chain is Cytoplasmic; the sequence is RAYFRYVDFPVSWRVDGVVANCCSCCEQVEASYLRSSRVVFWSPLVMWTRLSWLILR.

This sequence belongs to the EMP24/GP25L family.

It localises to the endoplasmic reticulum membrane. The protein localises to the golgi apparatus membrane. Its function is as follows. Constituent of COPII-coated endoplasmic reticulum-derived transport vesicles. Required for efficient transport of a subset of secretory proteins to the Golgi. Facilitates retrograde transport from the Golgi to the endoplasmic reticulum. This Aspergillus fumigatus (strain ATCC MYA-4609 / CBS 101355 / FGSC A1100 / Af293) (Neosartorya fumigata) protein is Endoplasmic reticulum vesicle protein 25 (erv25).